The chain runs to 396 residues: Maltose/maltodextrin-binding periplasmic protein (396 aa).

Positions 1–26 (MKIKTGARILALSALTTMMFSASALA) are cleaved as a signal peptide.

This sequence belongs to the bacterial solute-binding protein 1 family. As to quaternary structure, the complex is composed of two ATP-binding proteins (MalK), two transmembrane proteins (MalG and MalF) and a solute-binding protein (MalE).

It localises to the periplasm. Part of the ABC transporter complex MalEFGK involved in maltose/maltodextrin import. Binds maltose and higher maltodextrins. The polypeptide is Maltose/maltodextrin-binding periplasmic protein (malE) (Escherichia coli O157:H7).